A 311-amino-acid polypeptide reads, in one-letter code: Aspartate carbamoyltransferase catalytic subunit (311 aa).

Arg-55 and Thr-56 together coordinate carbamoyl phosphate. Lys-85 serves as a coordination point for L-aspartate. Carbamoyl phosphate-binding residues include Arg-106, His-135, and Gln-138. Arg-168 and Arg-230 together coordinate L-aspartate. 2 residues coordinate carbamoyl phosphate: Leu-268 and Pro-269.

The protein belongs to the aspartate/ornithine carbamoyltransferase superfamily. ATCase family. Heterododecamer (2C3:3R2) of six catalytic PyrB chains organized as two trimers (C3), and six regulatory PyrI chains organized as three dimers (R2).

It catalyses the reaction carbamoyl phosphate + L-aspartate = N-carbamoyl-L-aspartate + phosphate + H(+). The protein operates within pyrimidine metabolism; UMP biosynthesis via de novo pathway; (S)-dihydroorotate from bicarbonate: step 2/3. In terms of biological role, catalyzes the condensation of carbamoyl phosphate and aspartate to form carbamoyl aspartate and inorganic phosphate, the committed step in the de novo pyrimidine nucleotide biosynthesis pathway. The protein is Aspartate carbamoyltransferase catalytic subunit of Salmonella paratyphi A (strain AKU_12601).